Here is a 208-residue protein sequence, read N- to C-terminus: Golgi apparatus membrane protein TVP23 homolog B (208 aa).

N-acetylmethionine is present on methionine 1. Acidic residues predominate over residues 1 to 21 (MLQQDSNDDTEDVSLFDAEEE). Positions 1–27 (MLQQDSNDDTEDVSLFDAEEETTNRPK) are disordered. Helical transmembrane passes span 34-53 (PVAS…VYLL), 54-72 (CELF…ILLL), 126-146 (IFWL…FSAL), and 152-172 (KWLA…YGYI).

The protein belongs to the TVP23 family.

The protein localises to the membrane. This Bos taurus (Bovine) protein is Golgi apparatus membrane protein TVP23 homolog B (TVP23B).